The sequence spans 407 residues: MAGRVFEAWKGSNKFLFGGRLIFGPDAWSIPFTFLLIITPVCFFSVFVATHLRRELLPNNAGHVFLVAGVLFTVFVLILLFLTSARDPGIVPRNSHPPEEELCYDTTVSSDGRQTPTVQIPRTKEVMVYGVSVRVKYCDTCMLYRPPRCSHCSICNNCVERFDHHCPWRNYRYFFMFVSSATILCIYIFSMSALYIKVLMDNHQGTVWRAMRESPWAVMLMIYCFISLWFVGGLTGFHLYLISTNQTTYENFRYRSDNRINVYNRGCSNNFFETFCSKVKPSRNDFRAFIKEEPPRNITLATTWERPEEADEENREERRQKVEDDLDIDEDVMKLQQRLNDEEGSDTAHHKIDIDQMRIGSNERAPTIRSEARHGNWGARSNAQEEDVIAGSSVRESRSYAAAEEGR.

Helical transmembrane passes span 28–48 and 62–82; these read WSIP…SVFV and GHVF…LLFL. In terms of domain architecture, DHHC spans 136–179; the sequence is KYCDTCMLYRPPRCSHCSICNNCVERFDHHCPWRNYRYFFMFVS. The active-site S-palmitoyl cysteine intermediate is the Cys-166. 2 helical membrane-spanning segments follow: residues 174-194 and 217-237; these read FFMF…MSAL and AVML…LTGF. A disordered region spans residues 300–407; that stretch reads LATTWERPEE…RSYAAAEEGR (108 aa). Positions 346-356 are enriched in basic and acidic residues; that stretch reads DTAHHKIDIDQ.

This sequence belongs to the DHHC palmitoyltransferase family. Mainly expressed in seeds.

The protein localises to the cell membrane. It catalyses the reaction L-cysteinyl-[protein] + hexadecanoyl-CoA = S-hexadecanoyl-L-cysteinyl-[protein] + CoA. In terms of biological role, palmitoyl acyltransferase. The sequence is that of Probable protein S-acyltransferase 9 (PAT09) from Arabidopsis thaliana (Mouse-ear cress).